We begin with the raw amino-acid sequence, 327 residues long: Acetyl-coenzyme A carboxylase carboxyl transferase subunit alpha (327 aa).

Positions 46–299 (LEARAIQLRR…RQVLLRHLKD (254 aa)) constitute a CoA carboxyltransferase C-terminal domain.

It belongs to the AccA family. As to quaternary structure, acetyl-CoA carboxylase is a heterohexamer composed of biotin carboxyl carrier protein (AccB), biotin carboxylase (AccC) and two subunits each of ACCase subunit alpha (AccA) and ACCase subunit beta (AccD).

The protein resides in the cytoplasm. It catalyses the reaction N(6)-carboxybiotinyl-L-lysyl-[protein] + acetyl-CoA = N(6)-biotinyl-L-lysyl-[protein] + malonyl-CoA. The protein operates within lipid metabolism; malonyl-CoA biosynthesis; malonyl-CoA from acetyl-CoA: step 1/1. Component of the acetyl coenzyme A carboxylase (ACC) complex. First, biotin carboxylase catalyzes the carboxylation of biotin on its carrier protein (BCCP) and then the CO(2) group is transferred by the carboxyltransferase to acetyl-CoA to form malonyl-CoA. This is Acetyl-coenzyme A carboxylase carboxyl transferase subunit alpha from Synechococcus elongatus (strain ATCC 33912 / PCC 7942 / FACHB-805) (Anacystis nidulans R2).